The chain runs to 141 residues: Hemoglobin subunit alpha (141 aa).

The 141-residue stretch at 1–141 (VLSDKDKTNV…VSTVLTSKYR (141 aa)) folds into the Globin domain. Residue S3 is modified to Phosphoserine. Position 7 is an N6-succinyllysine (K7). T8 bears the Phosphothreonine mark. K11 is modified (N6-succinyllysine). Residue K16 is modified to N6-acetyllysine; alternate. The residue at position 16 (K16) is an N6-succinyllysine; alternate. The residue at position 24 (Y24) is a Phosphotyrosine. Position 35 is a phosphoserine (S35). K40 carries the post-translational modification N6-succinyllysine. S49 carries the post-translational modification Phosphoserine. Position 58 (H58) interacts with O2. Residue H87 coordinates heme b. S102 carries the phosphoserine modification. The residue at position 108 (T108) is a Phosphothreonine. S124 is modified (phosphoserine). T134 and T137 each carry phosphothreonine. At S138 the chain carries Phosphoserine.

It belongs to the globin family. As to quaternary structure, heterotetramer of two alpha chains and two beta chains. As to expression, red blood cells.

In terms of biological role, involved in oxygen transport from the lung to the various peripheral tissues. Its function is as follows. Hemopressin acts as an antagonist peptide of the cannabinoid receptor CNR1. Hemopressin-binding efficiently blocks cannabinoid receptor CNR1 and subsequent signaling. This is Hemoglobin subunit alpha (HBA) from Elephas maximus (Indian elephant).